The sequence spans 153 residues: MQVLTTSRKPGRKTRRFAKVLARFFNWKYVNRGKLSLEDLAGIAERFWIISEVKGNPAILNLYERGEKTLEVSFTLSNVNKIKMDDSPAVFKGKAPIDPLVFGAIPQTKAGLKLTRKVEFRKKVVVKGDEWLFFYDDEMLFKLRILKISRSSR.

Positions 1–153 constitute a Brix domain; it reads MQVLTTSRKP…RILKISRSSR (153 aa).

Probably involved in the biogenesis of the ribosome. This is Probable Brix domain-containing ribosomal biogenesis protein from Archaeoglobus fulgidus (strain ATCC 49558 / DSM 4304 / JCM 9628 / NBRC 100126 / VC-16).